Here is a 289-residue protein sequence, read N- to C-terminus: 33 kDa chaperonin (289 aa).

2 disulfide bridges follow: Cys229–Cys231 and Cys262–Cys265.

Belongs to the HSP33 family. Post-translationally, under oxidizing conditions two disulfide bonds are formed involving the reactive cysteines. Under reducing conditions zinc is bound to the reactive cysteines and the protein is inactive.

Its subcellular location is the cytoplasm. In terms of biological role, redox regulated molecular chaperone. Protects both thermally unfolding and oxidatively damaged proteins from irreversible aggregation. Plays an important role in the bacterial defense system toward oxidative stress. This Pectobacterium carotovorum subsp. carotovorum (strain PC1) protein is 33 kDa chaperonin.